The sequence spans 121 residues: UPF0045 protein sll0230 (121 aa).

It belongs to the UPF0045 family.

The polypeptide is UPF0045 protein sll0230 (Synechocystis sp. (strain ATCC 27184 / PCC 6803 / Kazusa)).